A 282-amino-acid polypeptide reads, in one-letter code: HTH-type transcriptional activator RhaR (282 aa).

The HTH araC/xylS-type domain maps to 179–277; sequence DKLITALANS…GMTPSQWRHL (99 aa). DNA-binding regions (H-T-H motif) lie at residues 196-217 and 244-267; these read DAFC…RAQT and VSEI…TRET.

In terms of assembly, binds DNA as a dimer.

Its subcellular location is the cytoplasm. In terms of biological role, activates expression of the rhaSR operon in response to L-rhamnose. The protein is HTH-type transcriptional activator RhaR of Salmonella choleraesuis (strain SC-B67).